The chain runs to 1024 residues: E3 ISG15--protein ligase HERC5 (1024 aa).

Over residues 1 to 13 (MERRSRRKSRRNG) the composition is skewed to basic residues. The interval 1 to 28 (MERRSRRKSRRNGRSTAGKAAATQPAKS) is disordered. RCC1 repeat units lie at residues 96-155 (NMKI…ALSK), 156-208 (GGEL…ALSM), 209-260 (SGNI…LLTQ), 262-312 (GLLF…AYVS), and 314-364 (LGKV…LIMI). The region spanning 702 to 1024 (ENEDLRKELW…EAINNNRGFG (323 aa)) is the HECT domain. The active-site Glycyl thioester intermediate is the C994.

(Microbial infection) Interacts with human cytomegalovirus protein UL26; this interaction inhibits global protein ISGylation. In terms of assembly, (Microbial infection) Interacts with Kaposi's sarcoma-associated herpesvirus protein v-IRF1; this interaction inhibits global protein ISGylation. As to quaternary structure, binds to CCNA1, CCNB1, CCND1 and CCNE1. Interacts with UBE2L6. Interacts with IRF3, this interaction is marginal in resting cells but enhanced upon viral infection. Interacts with influenza A virus NS1. Post-translationally, ISGylated. Expressed in testis and to a lesser degree in brain, ovary and placenta. Found in most tissues at low levels.

Its subcellular location is the cytoplasm. The protein localises to the perinuclear region. Its function is as follows. Major E3 ligase for ISG15 conjugation. Acts as a positive regulator of innate antiviral response in cells induced by interferon. Functions as part of the ISGylation machinery that recognizes target proteins in a broad and relatively non-specific manner. Catalyzes ISGylation of IRF3 which results in sustained activation, it attenuates IRF3-PIN1 interaction, which antagonizes IRF3 ubiquitination and degradation, and boosts the antiviral response. Mediates ISGylation of the phosphatase PTEN leading to its degradation, thus alleviating its suppression of the PI3K-AKT signaling pathway and promoting the production of cytokines that facilitate bacterial clearance. Interferes with the function of key viral structural proteins such as ebolavirus structural protein VP40 or HIV-1 protein GAG. Catalyzes ISGylation of influenza A viral NS1 which attenuates virulence; ISGylated NS1 fails to form homodimers and thus to interact with its RNA targets. Catalyzes ISGylation of papillomavirus type 16 L1 protein which results in dominant-negative effect on virus infectivity. Physically associated with polyribosomes, broadly modifies newly synthesized proteins in a cotranslational manner. In an interferon-stimulated cell, newly translated viral proteins are primary targets of ISG15. Promotes parkin/PRKN ubiquitin E3 ligase activity by suppressing the intramolecular interaction that maintains its autoinhibited conformation. In terms of biological role, (Microbial infection) Functions as an E3 ligase for ISGylation of hepatitis B virus protein X leading to enhanced viral replication due to increased interferon resistance. The polypeptide is E3 ISG15--protein ligase HERC5 (HERC5) (Homo sapiens (Human)).